Here is a 114-residue protein sequence, read N- to C-terminus: DNA-binding protein Mbur_0117 (114 aa).

The segment at 14–37 (ELQQQQSSPQNDAQAAYQQEQAQA) is disordered. The span at 16–35 (QQQQSSPQNDAQAAYQQEQA) shows a compositional bias: low complexity.

The protein belongs to the PDCD5 family.

This chain is DNA-binding protein Mbur_0117, found in Methanococcoides burtonii (strain DSM 6242 / NBRC 107633 / OCM 468 / ACE-M).